The primary structure comprises 119 residues: Small ribosomal subunit protein uS13 (119 aa).

Residues 92–119 (RRGLPVRGQQTQTNARTRKGPRRGPASR) form a disordered region.

This sequence belongs to the universal ribosomal protein uS13 family. In terms of assembly, part of the 30S ribosomal subunit. Forms a loose heterodimer with protein S19. Forms two bridges to the 50S subunit in the 70S ribosome.

Functionally, located at the top of the head of the 30S subunit, it contacts several helices of the 16S rRNA. In the 70S ribosome it contacts the 23S rRNA (bridge B1a) and protein L5 of the 50S subunit (bridge B1b), connecting the 2 subunits; these bridges are implicated in subunit movement. Contacts the tRNAs in the A and P-sites. The protein is Small ribosomal subunit protein uS13 of Halorhodospira halophila (strain DSM 244 / SL1) (Ectothiorhodospira halophila (strain DSM 244 / SL1)).